A 360-amino-acid polypeptide reads, in one-letter code: Holliday junction branch migration complex subunit RuvB (360 aa).

Residues 4-196 (HEEDLDQAEE…FGFTAHLEFY (193 aa)) are large ATPase domain (RuvB-L). ATP contacts are provided by residues Leu35, Arg36, Gly77, Lys80, Thr81, Thr82, 143 to 145 (EDF), Arg186, Tyr196, and Arg233. Thr81 is a binding site for Mg(2+). The tract at residues 197 to 267 (EPDELDLIVQ…VAQDALDLYE (71 aa)) is small ATPAse domain (RuvB-S). The segment at 270–360 (QLGLDRLDRG…PESDPPLFED (91 aa)) is head domain (RuvB-H). DNA contacts are provided by Arg306, Arg325, and Arg330.

It belongs to the RuvB family. Homohexamer. Forms an RuvA(8)-RuvB(12)-Holliday junction (HJ) complex. HJ DNA is sandwiched between 2 RuvA tetramers; dsDNA enters through RuvA and exits via RuvB. An RuvB hexamer assembles on each DNA strand where it exits the tetramer. Each RuvB hexamer is contacted by two RuvA subunits (via domain III) on 2 adjacent RuvB subunits; this complex drives branch migration. In the full resolvosome a probable DNA-RuvA(4)-RuvB(12)-RuvC(2) complex forms which resolves the HJ.

It localises to the cytoplasm. It catalyses the reaction ATP + H2O = ADP + phosphate + H(+). Its function is as follows. The RuvA-RuvB-RuvC complex processes Holliday junction (HJ) DNA during genetic recombination and DNA repair, while the RuvA-RuvB complex plays an important role in the rescue of blocked DNA replication forks via replication fork reversal (RFR). RuvA specifically binds to HJ cruciform DNA, conferring on it an open structure. The RuvB hexamer acts as an ATP-dependent pump, pulling dsDNA into and through the RuvAB complex. RuvB forms 2 homohexamers on either side of HJ DNA bound by 1 or 2 RuvA tetramers; 4 subunits per hexamer contact DNA at a time. Coordinated motions by a converter formed by DNA-disengaged RuvB subunits stimulates ATP hydrolysis and nucleotide exchange. Immobilization of the converter enables RuvB to convert the ATP-contained energy into a lever motion, pulling 2 nucleotides of DNA out of the RuvA tetramer per ATP hydrolyzed, thus driving DNA branch migration. The RuvB motors rotate together with the DNA substrate, which together with the progressing nucleotide cycle form the mechanistic basis for DNA recombination by continuous HJ branch migration. Branch migration allows RuvC to scan DNA until it finds its consensus sequence, where it cleaves and resolves cruciform DNA. The sequence is that of Holliday junction branch migration complex subunit RuvB from Nocardioides sp. (strain ATCC BAA-499 / JS614).